A 736-amino-acid chain; its full sequence is Gingipain R2 (736 aa).

The first 24 residues, 1-24 (MKKNFSRIVSIVAFSSLLGGMAFA), serve as a signal peptide directing secretion. The propeptide occupies 25–229 (QPAERGRNPQ…SVFMNYEATR (205 aa)). 7 residues coordinate Ca(2+): Asp307, Val329, Asp332, Tyr334, Glu336, Glu390, and His395. The active-site Proton donor is His440. Cys473 functions as the Nucleophile in the catalytic mechanism. Ca(2+) contacts are provided by Phe478, Glu487, Asp521, Glu522, Glu525, His531, Asp613, and Glu639.

This sequence belongs to the peptidase C25 family.

Its subcellular location is the secreted. It catalyses the reaction Hydrolysis of proteins and small molecule substrates, with a preference for Arg in P1.. Its function is as follows. Thiol protease. Acts synergistically with RgpA to catalyze the maturation of fimbrial subunits, such as FimA. Its proteolytic activity is a major factor in both periodontal tissue destruction and in evasion of host defense mechanisms. This is Gingipain R2 from Porphyromonas gingivalis (strain ATCC 33277 / DSM 20709 / CIP 103683 / JCM 12257 / NCTC 11834 / 2561).